Reading from the N-terminus, the 319-residue chain is Protein sprouty homolog 1 (319 aa).

An N-acetylmethionine modification is found at Met-1. 2 disordered regions span residues 54–78 (TEGP…ERTH) and 100–160 (AVLP…QPKQ). The segment covering 69 to 78 (PRQEKHERTH) has biased composition (basic and acidic residues). A compositionally biased stretch (low complexity) spans 112 to 131 (SRSTSTGSAASSGSNSSASS). Residues 183–295 (QCGKCKCGEC…CYDWIHRPGC (113 aa)) form the SPR domain.

It belongs to the sprouty family. As to quaternary structure, forms heterodimers with SPRY2. Interacts with TESK1. Interacts with CAV1 (via C-terminus).

The protein localises to the cytoplasm. It is found in the membrane. Its function is as follows. Inhibits fibroblast growth factor (FGF)-induced retinal lens fiber differentiation, probably by inhibiting FGF-mediated phosphorylation of ERK1/2. Inhibits TGFB-induced epithelial-to-mesenchymal transition in lens epithelial cells. The protein is Protein sprouty homolog 1 (SPRY1) of Homo sapiens (Human).